Reading from the N-terminus, the 269-residue chain is Formamidopyrimidine-DNA glycosylase (269 aa).

The active-site Schiff-base intermediate with DNA is the Pro-2. Catalysis depends on Glu-3, which acts as the Proton donor. The active-site Proton donor; for beta-elimination activity is the Lys-57. Residues His-90, Arg-109, and Lys-150 each contribute to the DNA site. The FPG-type zinc finger occupies 235 to 269 (QVYGRKGEPCRVCGTPIVATKHAQRATFYCRQCQK). Arg-259 (proton donor; for delta-elimination activity) is an active-site residue.

This sequence belongs to the FPG family. In terms of assembly, monomer. The cofactor is Zn(2+).

It catalyses the reaction Hydrolysis of DNA containing ring-opened 7-methylguanine residues, releasing 2,6-diamino-4-hydroxy-5-(N-methyl)formamidopyrimidine.. The catalysed reaction is 2'-deoxyribonucleotide-(2'-deoxyribose 5'-phosphate)-2'-deoxyribonucleotide-DNA = a 3'-end 2'-deoxyribonucleotide-(2,3-dehydro-2,3-deoxyribose 5'-phosphate)-DNA + a 5'-end 5'-phospho-2'-deoxyribonucleoside-DNA + H(+). In terms of biological role, involved in base excision repair of DNA damaged by oxidation or by mutagenic agents. Acts as a DNA glycosylase that recognizes and removes damaged bases. Has a preference for oxidized purines, such as 7,8-dihydro-8-oxoguanine (8-oxoG). Has AP (apurinic/apyrimidinic) lyase activity and introduces nicks in the DNA strand. Cleaves the DNA backbone by beta-delta elimination to generate a single-strand break at the site of the removed base with both 3'- and 5'-phosphates. The sequence is that of Formamidopyrimidine-DNA glycosylase from Escherichia coli O7:K1 (strain IAI39 / ExPEC).